The sequence spans 148 residues: Calcium-permeable cation-selective channel WeiTsing (148 aa).

Over 1 to 25 (METVSAVNQTLPISGGEPVKFTTYS) the chain is Cytoplasmic. The helical transmembrane segment at 26-46 (AAVHKVLVMINAGILGLLQLV) threads the bilayer. The Lumenal portion of the chain corresponds to 47–51 (SQQSS). Residues 52 to 72 (VLETHKAAFLCFCVFILFYAV) traverse the membrane as a helical segment. At 73–90 (LRVREAMDVRLQPGLVPR) the chain is on the cytoplasmic side. Residues 91–110 (LIGHGSHLFGGLAALVLVSV) traverse the membrane as a helical segment. Residues 111–116 (VSTAFS) are Lumenal-facing. The chain crosses the membrane as a helical span at residues 117-133 (IVLFLLWFIWLSAVVYL). Residues 134–148 (ETNKPSACPPQLPPV) lie on the Cytoplasmic side of the membrane.

Forms pentamers with a central pore to produce an ion channel.

Its subcellular location is the endoplasmic reticulum membrane. The catalysed reaction is Ca(2+)(in) = Ca(2+)(out). The enzyme catalyses Na(+)(in) = Na(+)(out). Functionally, calcium-permeable cation-selective channel conferring a broad-spectrum clubroot resistance by supporting cytosolic Ca(2+) increase in root pericycle cells. Triggers immunity toward fungal pathogens such as Plasmodiophora brassicae (Pb) and induces defenses. Also permeable to sodium ion Na(+) and possibly other cations. The polypeptide is Calcium-permeable cation-selective channel WeiTsing (Arabidopsis thaliana (Mouse-ear cress)).